Here is a 196-residue protein sequence, read N- to C-terminus: ATP synthase subunit b 2 (196 aa).

The span at 1–18 shows a compositional bias: low complexity; it reads MVVAQAGAPAHPPAAHGA. The tract at residues 1-33 is disordered; the sequence is MVVAQAGAPAHPPAAHGAEAGHGEAAGGEHGGF. A helical membrane pass occupies residues 41–60; sequence FASQLIWLIVSFGALYFLMS.

This sequence belongs to the ATPase B chain family. In terms of assembly, F-type ATPases have 2 components, F(1) - the catalytic core - and F(0) - the membrane proton channel. F(1) has five subunits: alpha(3), beta(3), gamma(1), delta(1), epsilon(1). F(0) has three main subunits: a(1), b(2) and c(10-14). The alpha and beta chains form an alternating ring which encloses part of the gamma chain. F(1) is attached to F(0) by a central stalk formed by the gamma and epsilon chains, while a peripheral stalk is formed by the delta and b chains.

It is found in the cell inner membrane. In terms of biological role, f(1)F(0) ATP synthase produces ATP from ADP in the presence of a proton or sodium gradient. F-type ATPases consist of two structural domains, F(1) containing the extramembraneous catalytic core and F(0) containing the membrane proton channel, linked together by a central stalk and a peripheral stalk. During catalysis, ATP synthesis in the catalytic domain of F(1) is coupled via a rotary mechanism of the central stalk subunits to proton translocation. Component of the F(0) channel, it forms part of the peripheral stalk, linking F(1) to F(0). The b'-subunit is a diverged and duplicated form of b found in plants and photosynthetic bacteria. This chain is ATP synthase subunit b 2 (atpF2), found in Azorhizobium caulinodans (strain ATCC 43989 / DSM 5975 / JCM 20966 / LMG 6465 / NBRC 14845 / NCIMB 13405 / ORS 571).